Consider the following 424-residue polypeptide: UPF0597 protein Shewana3_2972 (424 aa).

Belongs to the UPF0597 family.

In Shewanella sp. (strain ANA-3), this protein is UPF0597 protein Shewana3_2972.